The sequence spans 155 residues: Vasotocin-neurophysin VT 1 (155 aa).

The signal sequence occupies residues 1-20; sequence MPDSTIPLLCVLGLLALSSA. A disulfide bridge connects residues Cys-21 and Cys-26. Gly-29 is subject to Glycine amide. Cystine bridges form between Cys-41/Cys-85, Cys-44/Cys-58, Cys-52/Cys-75, Cys-59/Cys-65, Cys-92/Cys-105, Cys-99/Cys-117, and Cys-106/Cys-111.

Belongs to the vasopressin/oxytocin family. In terms of processing, seven disulfide bonds are present in neurophysin.

The protein resides in the secreted. Vasotocin is probably an antidiuretic hormone. In Oncorhynchus masou (Cherry salmon), this protein is Vasotocin-neurophysin VT 1.